The sequence spans 318 residues: Aspartate carbamoyltransferase catalytic subunit (318 aa).

Carbamoyl phosphate is bound by residues Arg-67 and Thr-68. Residue Lys-95 participates in L-aspartate binding. Carbamoyl phosphate is bound by residues Arg-117, His-145, and Gln-148. 2 residues coordinate L-aspartate: Arg-178 and Arg-236. Carbamoyl phosphate contacts are provided by Gly-277 and Pro-278.

It belongs to the aspartate/ornithine carbamoyltransferase superfamily. ATCase family. In terms of assembly, heterododecamer (2C3:3R2) of six catalytic PyrB chains organized as two trimers (C3), and six regulatory PyrI chains organized as three dimers (R2).

The enzyme catalyses carbamoyl phosphate + L-aspartate = N-carbamoyl-L-aspartate + phosphate + H(+). Its pathway is pyrimidine metabolism; UMP biosynthesis via de novo pathway; (S)-dihydroorotate from bicarbonate: step 2/3. Its function is as follows. Catalyzes the condensation of carbamoyl phosphate and aspartate to form carbamoyl aspartate and inorganic phosphate, the committed step in the de novo pyrimidine nucleotide biosynthesis pathway. This Roseiflexus sp. (strain RS-1) protein is Aspartate carbamoyltransferase catalytic subunit.